The chain runs to 94 residues: Beta-defensin 132 (94 aa).

The N-terminal stretch at 1 to 22 (MKFLLLVLAALGFLTQVIPASA) is a signal peptide. Intrachain disulfides connect Cys-27-Cys-55 and Cys-39-Cys-56. Residues 72–94 (GNHWQSRRNTQRKDKKQQTTVTS) are disordered. A compositionally biased stretch (basic residues) spans 76-86 (QSRRNTQRKDK).

This sequence belongs to the beta-defensin family.

The protein resides in the secreted. Its function is as follows. Has antibacterial activity. In Gorilla gorilla gorilla (Western lowland gorilla), this protein is Beta-defensin 132 (DEFB132).